The sequence spans 362 residues: Transcription factor Sox-7 (362 aa).

A disordered region spans residues 21-41 (EDLSDGLSPHRSPREKGSETR). Residues 32-41 (SPREKGSETR) show a composition bias toward basic and acidic residues. The HMG box DNA-binding region spans 42-110 (IRRPMNAFMV…QHMQDYPNYK (69 aa)). In terms of domain architecture, Sox C-terminal spans 245 to 362 (QTGSSMIPPV…ATYYNSYSVS (118 aa)).

In terms of tissue distribution, expressed in the embryonic pronephric sinus as well as posterior cardinal veins.

It localises to the nucleus. Its function is as follows. Transcription factor. Binds to the DNA sequence 5'-AACAAT-3'. Acts downstream of vegt and upstream of nodal signaling to promote endodermal and mesodermal differentiation by promoting vegt-induced expression of both endodermal genes (including endodermin) and mesodermal genes (including snai1/snail and snai2/slug). Induces expression of multiple nodal genes (including nodal, nodal2, nodal4, nodal5 and nodal6) and binds directly to sites within the promoter of the nodal5 gene. The endodermal and mesodermal specification pathways then interact to initiate cardiogenesis. Acts partially redundantly with sox18 during cardiogenesis. Also acts as an antagonist of beta-catenin signaling. Regulates (possibly indirectly) development of the pronephros, the functional larval kidney. This chain is Transcription factor Sox-7, found in Xenopus tropicalis (Western clawed frog).